The following is a 688-amino-acid chain: Protein sel-1 homolog 2 (688 aa).

Positions 1-18 (MNPLALLVEILIIIEVTT) are cleaved as a signal peptide. At 19–662 (KNSEAERYNR…KWKWLKLDST (644 aa)) the chain is on the extracellular side. N-linked (GlcNAc...) asparagine glycosylation occurs at N34. Sel1-like repeat units follow at residues 107-142 (GDELFKMGNKILQESKSQKQKTEAYTFFTRAADMGN), 143-178 (LKAMEKMADALLFGSFGMQNITAAIQLYESLAKEGS), 179-214 (YKAQNALGFLSSYGIGMEYDQAKALIYYTFGSAGGS), 215-250 (MMSQMILGYRYLSGINVLQNCEVALNHYKKVADYIA), 297-333 (VQIQVSLGQLHLIGRKGLDQDYSKALYYFLKAAKAGS), 334-370 (ANAMAFIGKMYLEGNAAAPQNNATAFKYFSMAASKGN), 371-406 (AIGLHGLGLLYFHGKGVPVNYGEALKYFQKAAEKGW), 407-442 (PNAQFHLGFMYYSGSGVWKDYKLAFKYFYLASQSGQ), 443-478 (PLAIYYLAEMYATGTGVLRSCRTAVEPYKGVCELGH), 551-586 (AFARVKIGDYHYYGYGTKKDYETAATHYSIAADKHH), and 588-623 (AQAMFNLAYMYEHGLGIAQDIHLARRLYDMAAQTSP). N162 is a glycosylation site (N-linked (GlcNAc...) asparagine). A helical transmembrane segment spans residues 663 to 683 (IGPYWDLLVIGLIVVVLIFLL). Topologically, residues 684–688 (RNHHR) are cytoplasmic.

The protein belongs to the sel-1 family.

It localises to the membrane. Its subcellular location is the cell projection. It is found in the cilium. The protein resides in the nucleus speckle. In Rattus norvegicus (Rat), this protein is Protein sel-1 homolog 2 (Sel1l2).